Reading from the N-terminus, the 582-residue chain is mRNA-decapping enzyme 1A (582 aa).

Ser-62 bears the Phosphoserine mark. Positions 132-141 (RSQQAARDKQ) are enriched in basic and acidic residues. 2 disordered regions span residues 132–154 (RSQQ…DHRP) and 172–214 (QMGD…PSGH). Phosphoserine is present on residues Ser-142, Ser-179, Ser-180, Ser-315, Ser-319, and Ser-334. A compositionally biased stretch (polar residues) spans 173–196 (MGDSNISSPGLQPSTQLSNLGSTE). A Phosphothreonine modification is found at Thr-348. Residue Ser-353 is modified to Phosphoserine. Position 376 is an asymmetric dimethylarginine (Arg-376). Thr-401 carries the phosphothreonine modification. 4 positions are modified to phosphoserine: Ser-422, Ser-522, Ser-523, and Ser-525. The tract at residues 513–536 (RSSDLERKASSPSPLTIGTPESQR) is disordered. A compositionally biased stretch (polar residues) spans 522–533 (SSPSPLTIGTPE). A phosphothreonine mark is found at Thr-528 and Thr-531.

Belongs to the DCP1 family. As to quaternary structure, (Microbial infection) Interacts with rotavirus A non-structural protein 2; this interaction probably plays a role in the sequestration of DCP1A in viral factories. Interacts with rotavirus A non-structural protein 5; this interaction probably plays a role in its sequestration in viral factories. Forms a complex with EDC3, DCP2, DDX6 and EDC4/HEDLS, within this complex directly interacts with EDC3. Part of a cytoplasmic complex containing proteins involved in mRNA decay, including XRN1 and LSM1. Interacts with DCP1B. Interacts with DCP2. Interacts with DDX17 in an RNA-independent manner. Interacts with PNRC2. Interacts with SMAD4. Interacts with UPF1. Interacts with ZC3HAV1. Interacts with ZFP36L1. Interacts with NBDY. Interacts with DHX34; the interaction is RNA-independent. Detected in heart, brain, placenta, lung, skeletal muscle, liver, kidney and pancreas.

It localises to the cytoplasm. Its subcellular location is the P-body. It is found in the nucleus. The catalysed reaction is a 5'-end (N(7)-methyl 5'-triphosphoguanosine)-ribonucleoside in mRNA + H2O = N(7)-methyl-GDP + a 5'-end phospho-ribonucleoside in mRNA + 2 H(+). Necessary for the degradation of mRNAs, both in normal mRNA turnover and in nonsense-mediated mRNA decay. Removes the 7-methyl guanine cap structure from mRNA molecules, yielding a 5'-phosphorylated mRNA fragment and 7m-GDP. Contributes to the transactivation of target genes after stimulation by TGFB1. Essential for embryonic development. In Homo sapiens (Human), this protein is mRNA-decapping enzyme 1A (DCP1A).